Reading from the N-terminus, the 274-residue chain is Large ribosomal subunit protein uL2 (274 aa).

Disordered regions lie at residues 21-59 (KVGL…GGHK) and 224-274 (AMNP…QLKG). The span at 32–42 (SLTSGKKSSGG) shows a compositional bias: low complexity. Over residues 45–59 (NHGRITTRHRGGGHK) the composition is skewed to basic residues. The segment covering 263 to 274 (KSSDKYIKQLKG) has biased composition (basic and acidic residues).

It belongs to the universal ribosomal protein uL2 family. As to quaternary structure, part of the 50S ribosomal subunit. Forms a bridge to the 30S subunit in the 70S ribosome.

Functionally, one of the primary rRNA binding proteins. Required for association of the 30S and 50S subunits to form the 70S ribosome, for tRNA binding and peptide bond formation. It has been suggested to have peptidyltransferase activity; this is somewhat controversial. Makes several contacts with the 16S rRNA in the 70S ribosome. The protein is Large ribosomal subunit protein uL2 of Wolbachia pipientis wMel.